We begin with the raw amino-acid sequence, 131 residues long: MDATTTDATTAKRKRPAASDIADDAPTTVDEVSDAEVEEFYAILRRMRDATRRLGARPPPPRAPAWRPSFSWEDFADAPPKQAPPPPQQPADHERVAENATPPRRPAPGLDLNVEPPSDAPATPRSARAPA.

Disordered regions lie at residues 1-33 (MDAT…DEVS) and 51-131 (TRRL…RAPA). A Nuclear localization signal motif is present at residues 12-15 (KRKR). Residues 116–131 (PPSDAPATPRSARAPA) are compositionally biased toward low complexity.

This sequence belongs to the NPR1-interactor family. As to quaternary structure, interacts with NPR1/NH1. Interacts with NPR2/NH2.

It localises to the nucleus. In terms of biological role, acts as a negative regulator of disease resistance. Acts on basal resistance, age-related resistance and resistance mediated by the LRR receptor kinase XA21. Plants over-expressing NRR display enhanced susceptibility to the bacterial blight Xanthomonas oryzae pv. oryzae (Xoo). The sequence is that of Protein NEGATIVE REGULATOR OF RESISTANCE from Oryza sativa subsp. indica (Rice).